The following is a 334-amino-acid chain: Beta-hexosaminidase (334 aa).

Substrate-binding positions include Asp-60, Arg-68, Arg-133, and 163 to 164 (KH). His-176 (proton donor/acceptor) is an active-site residue. The active-site Nucleophile is the Asp-247.

It belongs to the glycosyl hydrolase 3 family. NagZ subfamily.

Its subcellular location is the cytoplasm. The enzyme catalyses Hydrolysis of terminal non-reducing N-acetyl-D-hexosamine residues in N-acetyl-beta-D-hexosaminides.. It participates in cell wall biogenesis; peptidoglycan recycling. In terms of biological role, plays a role in peptidoglycan recycling by cleaving the terminal beta-1,4-linked N-acetylglucosamine (GlcNAc) from peptide-linked peptidoglycan fragments, giving rise to free GlcNAc, anhydro-N-acetylmuramic acid and anhydro-N-acetylmuramic acid-linked peptides. This Xanthomonas oryzae pv. oryzae (strain MAFF 311018) protein is Beta-hexosaminidase.